The following is a 355-amino-acid chain: Phosphoserine aminotransferase (355 aa).

An L-glutamate-binding site is contributed by R41. Residues 75–76 (AS), W99, T147, D166, and Q189 each bind pyridoxal 5'-phosphate. K190 is modified (N6-(pyridoxal phosphate)lysine). Pyridoxal 5'-phosphate is bound at residue 231–232 (NT).

The protein belongs to the class-V pyridoxal-phosphate-dependent aminotransferase family. SerC subfamily. As to quaternary structure, homodimer. The cofactor is pyridoxal 5'-phosphate.

It is found in the cytoplasm. The catalysed reaction is O-phospho-L-serine + 2-oxoglutarate = 3-phosphooxypyruvate + L-glutamate. It catalyses the reaction 4-(phosphooxy)-L-threonine + 2-oxoglutarate = (R)-3-hydroxy-2-oxo-4-phosphooxybutanoate + L-glutamate. Its pathway is amino-acid biosynthesis; L-serine biosynthesis; L-serine from 3-phospho-D-glycerate: step 2/3. It participates in cofactor biosynthesis; pyridoxine 5'-phosphate biosynthesis; pyridoxine 5'-phosphate from D-erythrose 4-phosphate: step 3/5. In terms of biological role, catalyzes the reversible conversion of 3-phosphohydroxypyruvate to phosphoserine and of 3-hydroxy-2-oxo-4-phosphonooxybutanoate to phosphohydroxythreonine. The chain is Phosphoserine aminotransferase from Bacteroides fragilis (strain ATCC 25285 / DSM 2151 / CCUG 4856 / JCM 11019 / LMG 10263 / NCTC 9343 / Onslow / VPI 2553 / EN-2).